A 233-amino-acid chain; its full sequence is Homeobox protein not2 (233 aa).

The segment at residues 135–194 is a DNA-binding region (homeobox); it reads LKRIRTVFTPEQLERLEKEFLKQQYMVGTERVDLASTLNLTETQVKVWFQNRRIKWRKQS. The disordered stretch occupies residues 212 to 233; sequence SSDHTDDSRETEEEEDDVDVEL. The segment covering 220–233 has biased composition (acidic residues); sequence RETEEEEDDVDVEL.

As to expression, localized to the dorsal lip of the blastopore (Spemann organizer) during early gastrulation, after which expression continues in tissues derived from the organizer. Expressed in the notochord during mid-gastrulation, the chordoneural hinge, notochord and ventral spinal cord of the tailbud at stage 22, and finally the tip of the tail in the tadpole (stage 35).

The protein localises to the nucleus. Functionally, transcriptional repressor. Plays a fundamental role in notochord formation, acting within the mesodermal region. Acts downstream of gsc and upstream of chrd and foxa4-A/pintallavis. The protein is Homeobox protein not2 of Xenopus laevis (African clawed frog).